A 92-amino-acid chain; its full sequence is YcgL domain-containing protein Shewmr7_2249 (92 aa).

In terms of domain architecture, YcgL spans 1-85 (MLCAVYKSSR…PQVNLLAEHR (85 aa)).

The polypeptide is YcgL domain-containing protein Shewmr7_2249 (Shewanella sp. (strain MR-7)).